The following is a 99-amino-acid chain: Aspartyl/glutamyl-tRNA(Asn/Gln) amidotransferase subunit C (99 aa).

This sequence belongs to the GatC family. Heterotrimer of A, B and C subunits.

It catalyses the reaction L-glutamyl-tRNA(Gln) + L-glutamine + ATP + H2O = L-glutaminyl-tRNA(Gln) + L-glutamate + ADP + phosphate + H(+). The catalysed reaction is L-aspartyl-tRNA(Asn) + L-glutamine + ATP + H2O = L-asparaginyl-tRNA(Asn) + L-glutamate + ADP + phosphate + 2 H(+). Its function is as follows. Allows the formation of correctly charged Asn-tRNA(Asn) or Gln-tRNA(Gln) through the transamidation of misacylated Asp-tRNA(Asn) or Glu-tRNA(Gln) in organisms which lack either or both of asparaginyl-tRNA or glutaminyl-tRNA synthetases. The reaction takes place in the presence of glutamine and ATP through an activated phospho-Asp-tRNA(Asn) or phospho-Glu-tRNA(Gln). In Mycolicibacterium smegmatis (strain ATCC 700084 / mc(2)155) (Mycobacterium smegmatis), this protein is Aspartyl/glutamyl-tRNA(Asn/Gln) amidotransferase subunit C.